We begin with the raw amino-acid sequence, 408 residues long: Histidine--tRNA ligase (408 aa).

This sequence belongs to the class-II aminoacyl-tRNA synthetase family. As to quaternary structure, homodimer.

The protein resides in the cytoplasm. It carries out the reaction tRNA(His) + L-histidine + ATP = L-histidyl-tRNA(His) + AMP + diphosphate + H(+). This is Histidine--tRNA ligase from Campylobacter jejuni subsp. jejuni serotype O:6 (strain 81116 / NCTC 11828).